The primary structure comprises 388 residues: Succinate--CoA ligase [ADP-forming] subunit beta (388 aa).

In terms of domain architecture, ATP-grasp spans 9-244 (KQLFARSGLP…QSQEDPREAQ (236 aa)). ATP is bound by residues K46, 53 to 55 (GRG), E99, T102, and E107. 2 residues coordinate Mg(2+): N199 and D213. Residues N264 and 321-323 (GIV) contribute to the substrate site.

Belongs to the succinate/malate CoA ligase beta subunit family. As to quaternary structure, heterotetramer of two alpha and two beta subunits. Mg(2+) serves as cofactor.

It catalyses the reaction succinate + ATP + CoA = succinyl-CoA + ADP + phosphate. It carries out the reaction GTP + succinate + CoA = succinyl-CoA + GDP + phosphate. The protein operates within carbohydrate metabolism; tricarboxylic acid cycle; succinate from succinyl-CoA (ligase route): step 1/1. Functionally, succinyl-CoA synthetase functions in the citric acid cycle (TCA), coupling the hydrolysis of succinyl-CoA to the synthesis of either ATP or GTP and thus represents the only step of substrate-level phosphorylation in the TCA. The beta subunit provides nucleotide specificity of the enzyme and binds the substrate succinate, while the binding sites for coenzyme A and phosphate are found in the alpha subunit. The chain is Succinate--CoA ligase [ADP-forming] subunit beta from Cronobacter sakazakii (strain ATCC BAA-894) (Enterobacter sakazakii).